Consider the following 448-residue polypeptide: 3-phosphoshikimate 1-carboxyvinyltransferase (448 aa).

Lys38, Ser39, and Arg43 together coordinate 3-phosphoshikimate. Lys38 contributes to the phosphoenolpyruvate binding site. 2 residues coordinate phosphoenolpyruvate: Gly111 and Arg140. 4 residues coordinate 3-phosphoshikimate: Ser185, Gln187, Asp335, and Lys362. Gln187 contributes to the phosphoenolpyruvate binding site. The active-site Proton acceptor is the Asp335. The phosphoenolpyruvate site is built by Arg366 and Arg408.

The protein belongs to the EPSP synthase family. In terms of assembly, monomer.

The protein resides in the cytoplasm. The enzyme catalyses 3-phosphoshikimate + phosphoenolpyruvate = 5-O-(1-carboxyvinyl)-3-phosphoshikimate + phosphate. It participates in metabolic intermediate biosynthesis; chorismate biosynthesis; chorismate from D-erythrose 4-phosphate and phosphoenolpyruvate: step 6/7. Catalyzes the transfer of the enolpyruvyl moiety of phosphoenolpyruvate (PEP) to the 5-hydroxyl of shikimate-3-phosphate (S3P) to produce enolpyruvyl shikimate-3-phosphate and inorganic phosphate. The polypeptide is 3-phosphoshikimate 1-carboxyvinyltransferase (Gloeothece citriformis (strain PCC 7424) (Cyanothece sp. (strain PCC 7424))).